The primary structure comprises 323 residues: Sporulation-delaying protein SdpB (323 aa).

The next 6 membrane-spanning stretches (helical) occupy residues 27–49 (LLGF…SYSA), 70–92 (SINF…IGWR), 112–134 (LTID…VTLL), 155–177 (TVLF…NAAL), 219–241 (IVVI…ISNI), and 248–270 (LVLG…FGLI).

Its subcellular location is the cell membrane. Functionally, required for the maturation of SdpC to SDP. Not required for SdpC signal peptide cleavage, secretion from the cell or disulfide bond formation. This is Sporulation-delaying protein SdpB from Bacillus subtilis (strain 168).